The following is a 78-amino-acid chain: UPF0270 protein YE3952 (78 aa).

The protein belongs to the UPF0270 family.

The chain is UPF0270 protein YE3952 from Yersinia enterocolitica serotype O:8 / biotype 1B (strain NCTC 13174 / 8081).